An 878-amino-acid polypeptide reads, in one-letter code: Coatomer subunit gamma (878 aa).

HEAT repeat units follow at residues 64–101 (REAT…VAED), 287–324 (RMLS…THPA), 326–359 (VTTC…GAES), 360–396 (SVER…KYPR), 399–434 (TVLM…ENAD), and 471–508 (ATPS…SCPA).

Belongs to the COPG family. In terms of assembly, oligomeric complex that consists of at least the alpha, beta, beta', gamma, delta, epsilon and zeta subunits.

It localises to the cytoplasm. The protein localises to the golgi apparatus membrane. Its subcellular location is the cytoplasmic vesicle. It is found in the COPI-coated vesicle membrane. The protein resides in the endoplasmic reticulum. Functionally, the coatomer is a cytosolic protein complex that binds to dilysine motifs and reversibly associates with Golgi non-clathrin-coated vesicles, which further mediate biosynthetic protein transport from the ER, via the Golgi up to the trans Golgi network. Coatomer complex is required for budding from Golgi membranes, and is essential for the retrograde Golgi-to-ER transport of dilysine-tagged proteins. Required for limiting lipid storage in lipid droplets. Involved in the expansion of luminal extracellular matrices and apical membrane during tubulogenesis. Required in the tracheal epithelium for luminal protein secretion and diametric tube growth. In salivary glands, required for deposition of O-glycans and luminal extracellular matrix assembly. Required for epidermal morphogenesis and cuticle development. The sequence is that of Coatomer subunit gamma from Drosophila pseudoobscura pseudoobscura (Fruit fly).